The primary structure comprises 225 residues: Myelin-associated neurite-outgrowth inhibitor (225 aa).

Topologically, residues M1–H58 are cytoplasmic. Residues V59–A75 traverse the membrane as a helical segment. The Extracellular segment spans residues R76 to N173. The chain crosses the membrane as a helical span at residues G174–L193. Residues T194–W225 lie on the Cytoplasmic side of the membrane.

This sequence belongs to the FAM168 family.

Its subcellular location is the cytoplasm. The protein localises to the perinuclear region. The protein resides in the cell membrane. It localises to the cell projection. It is found in the axon. Its function is as follows. Inhibitor of neuronal axonal outgrowth. This chain is Myelin-associated neurite-outgrowth inhibitor (fam168b), found in Xenopus laevis (African clawed frog).